A 369-amino-acid polypeptide reads, in one-letter code: Virulence factor-related M protein (369 aa).

The first 41 residues, 1-41 (MARQQTKKNYSLRKLKTGTASVAVALTVLGAGFANQTEVRA), serve as a signal peptide directing secretion. C repeat units lie at residues 120-154 (AKAT…EAKH), 162-196 (KKLT…EAKY), and 211-246 (QKLE…TSEL). Basic and acidic residues-rich tracts occupy residues 125 to 165 (ENEI…KKLT), 202 to 219 (DHQA…DLPK), 228 to 243 (LSRD…KKVT), and 257 to 271 (EESK…AELQ). Disordered regions lie at residues 125 to 189 (ENEI…RAAK) and 202 to 271 (DHQA…AELQ). Residues 129 to 200 (SEASRKGLSR…ELEAKYQKLE (72 aa)) form a 2 X repeats, type A region. The interval 132 to 241 (SRKGLSRDLE…LEASREANKK (110 aa)) is 3 X repeats, type B. 4 D repeats span residues 272 to 277 (AKLDAQ), 278 to 283 (GKALKE), 286 to 291 (AKQTEE), and 293 to 298 (AKLRAE). Residues 292 to 301 (LAKLRAEKAA) are compositionally biased toward basic and acidic residues. Positions 292–341 (LAKLRAEKAAGSKTPATKPANKERSGRAAQTATRPSQNKGMRSQLPSTGE) are disordered. Residues 319–338 (AAQTATRPSQNKGMRSQLPS) are compositionally biased toward polar residues. Residues 336 to 340 (LPSTG) carry the LPXTG sorting signal motif. At Thr339 the chain carries Pentaglycyl murein peptidoglycan amidated threonine. Residues 340 to 369 (GEAANPFFTAAAATVMVSAGMLALKRKEEN) constitute a propeptide, removed by sortase.

This sequence belongs to the M protein family.

It is found in the secreted. Its subcellular location is the cell wall. The sequence is that of Virulence factor-related M protein (ennX) from Streptococcus pyogenes serotype M49.